Reading from the N-terminus, the 1405-residue chain is DNA-directed RNA polymerase subunit beta' (1405 aa).

Zn(2+)-binding residues include cysteine 70, cysteine 72, cysteine 85, and cysteine 88. Residues aspartate 460, aspartate 462, and aspartate 464 each coordinate Mg(2+). Cysteine 815, cysteine 890, cysteine 897, and cysteine 900 together coordinate Zn(2+). Residues glycine 1375–glutamate 1405 form a disordered region.

It belongs to the RNA polymerase beta' chain family. The RNAP catalytic core consists of 2 alpha, 1 beta, 1 beta' and 1 omega subunit. When a sigma factor is associated with the core the holoenzyme is formed, which can initiate transcription. Mg(2+) is required as a cofactor. Zn(2+) serves as cofactor.

It carries out the reaction RNA(n) + a ribonucleoside 5'-triphosphate = RNA(n+1) + diphosphate. Functionally, DNA-dependent RNA polymerase catalyzes the transcription of DNA into RNA using the four ribonucleoside triphosphates as substrates. This is DNA-directed RNA polymerase subunit beta' from Xanthomonas oryzae pv. oryzae (strain MAFF 311018).